A 439-amino-acid chain; its full sequence is Keratin, type I cytoskeletal 40 (439 aa).

A head region spans residues 1–89; sequence MASDGSPSCC…CEEGSFNSNE (89 aa). The region spanning 89–400 is the IF rod domain; the sequence is EKETMQFLND…GLLEKEDSRL (312 aa). The segment at 90–124 is coil 1A; sequence KETMQFLNDRLASYLERVRSLEENNAELECRIREQ. The tract at residues 125–135 is linker 1; sequence CEPNAPLVCPD. The tract at residues 136 to 236 is coil 1B; the sequence is YQRYFDTIEE…HEEEVNLLRE (101 aa). Residues 237–252 are linker 12; that stretch reads QLGDRLSVELDTAPTV. The segment at 253-396 is coil 2; the sequence is DLNKVLDEMR…NTYRGLLEKE (144 aa). Residues 397–439 are tail; that stretch reads DSRLPCNPGSGAPMPNSTCEPCSNSMCEPCSAYVICTVENCCA.

This sequence belongs to the intermediate filament family. As to quaternary structure, heterotetramer of two type I and two type II keratins.

Its function is as follows. May play a role in late hair differentiation. In Mus musculus (Mouse), this protein is Keratin, type I cytoskeletal 40 (Krt40).